We begin with the raw amino-acid sequence, 198 residues long: Holliday junction branch migration complex subunit RuvA (198 aa).

The domain I stretch occupies residues 1 to 63 (MIALLTGQIA…EDAIQLYGFR (63 aa)). The domain II stretch occupies residues 64 to 142 (TSLEKSFFQL…KLDLSSVVVP (79 aa)). The flexible linker stretch occupies residues 143 to 153 (EPRQMPEDDLL). The domain III stretch occupies residues 153–198 (LEDVVSALLNLGYKEPQVRKVLAGLNPGSDASLEGVLKQALKSLMR).

It belongs to the RuvA family. In terms of assembly, homotetramer. Forms an RuvA(8)-RuvB(12)-Holliday junction (HJ) complex. HJ DNA is sandwiched between 2 RuvA tetramers; dsDNA enters through RuvA and exits via RuvB. An RuvB hexamer assembles on each DNA strand where it exits the tetramer. Each RuvB hexamer is contacted by two RuvA subunits (via domain III) on 2 adjacent RuvB subunits; this complex drives branch migration. In the full resolvosome a probable DNA-RuvA(4)-RuvB(12)-RuvC(2) complex forms which resolves the HJ.

The protein localises to the cytoplasm. Functionally, the RuvA-RuvB-RuvC complex processes Holliday junction (HJ) DNA during genetic recombination and DNA repair, while the RuvA-RuvB complex plays an important role in the rescue of blocked DNA replication forks via replication fork reversal (RFR). RuvA specifically binds to HJ cruciform DNA, conferring on it an open structure. The RuvB hexamer acts as an ATP-dependent pump, pulling dsDNA into and through the RuvAB complex. HJ branch migration allows RuvC to scan DNA until it finds its consensus sequence, where it cleaves and resolves the cruciform DNA. The polypeptide is Holliday junction branch migration complex subunit RuvA (Pelobacter propionicus (strain DSM 2379 / NBRC 103807 / OttBd1)).